The sequence spans 341 residues: 5-formaminoimidazole-4-carboxamide-1-(beta)-D-ribofuranosyl 5'-monophosphate synthetase (341 aa).

2 residues coordinate 5-amino-1-(5-phospho-beta-D-ribosyl)imidazole-4-carboxamide: histidine 10 and threonine 77. The 212-residue stretch at 106 to 317 (DRSLKERLMR…YYGLLFDEPI (212 aa)) folds into the ATP-grasp domain. Residues 132–188 (DTLV…VLAY) and glutamate 210 contribute to the ATP site. Asparagine 238 contributes to the 5-amino-1-(5-phospho-beta-D-ribosyl)imidazole-4-carboxamide binding site. Residues glutamate 277 and glutamate 290 each coordinate Mg(2+).

This sequence belongs to the phosphohexose mutase family. The cofactor is Mg(2+). Mn(2+) serves as cofactor.

The catalysed reaction is 5-amino-1-(5-phospho-beta-D-ribosyl)imidazole-4-carboxamide + formate + ATP = 5-formamido-1-(5-phospho-D-ribosyl)imidazole-4-carboxamide + ADP + phosphate. Its pathway is purine metabolism; IMP biosynthesis via de novo pathway; 5-formamido-1-(5-phospho-D-ribosyl)imidazole-4-carboxamide from 5-amino-1-(5-phospho-D-ribosyl)imidazole-4-carboxamide (formate route): step 1/1. Its function is as follows. Catalyzes the ATP- and formate-dependent formylation of 5-aminoimidazole-4-carboxamide-1-beta-d-ribofuranosyl 5'-monophosphate (AICAR) to 5-formaminoimidazole-4-carboxamide-1-beta-d-ribofuranosyl 5'-monophosphate (FAICAR) in the absence of folates. In Cenarchaeum symbiosum (strain A), this protein is 5-formaminoimidazole-4-carboxamide-1-(beta)-D-ribofuranosyl 5'-monophosphate synthetase.